Reading from the N-terminus, the 334-residue chain is Glyceraldehyde-3-phosphate dehydrogenase (334 aa).

NAD(+) is bound by residues 10-11 (RI), Asp-33, Lys-77, and Thr-119. Residues 149 to 151 (SCT), Thr-180, 209 to 210 (TG), and Arg-232 each bind D-glyceraldehyde 3-phosphate. Catalysis depends on Cys-150, which acts as the Nucleophile. Asn-314 is an NAD(+) binding site.

This sequence belongs to the glyceraldehyde-3-phosphate dehydrogenase family. As to quaternary structure, homotetramer.

The protein resides in the cytoplasm. The enzyme catalyses D-glyceraldehyde 3-phosphate + phosphate + NAD(+) = (2R)-3-phospho-glyceroyl phosphate + NADH + H(+). Its pathway is carbohydrate degradation; glycolysis; pyruvate from D-glyceraldehyde 3-phosphate: step 1/5. Functionally, catalyzes the oxidative phosphorylation of glyceraldehyde 3-phosphate (G3P) to 1,3-bisphosphoglycerate (BPG) using the cofactor NAD. The first reaction step involves the formation of a hemiacetal intermediate between G3P and a cysteine residue, and this hemiacetal intermediate is then oxidized to a thioester, with concomitant reduction of NAD to NADH. The reduced NADH is then exchanged with the second NAD, and the thioester is attacked by a nucleophilic inorganic phosphate to produce BPG. In Chlamydia trachomatis serovar L2 (strain ATCC VR-902B / DSM 19102 / 434/Bu), this protein is Glyceraldehyde-3-phosphate dehydrogenase (gap).